The following is a 66-amino-acid chain: Large ribosomal subunit protein bL35 (66 aa).

The interval 1 to 42 (MPKQKTHRASAKRFKRTANGGLKRHHAYTGHRFHGKTKKQRR) is disordered.

This sequence belongs to the bacterial ribosomal protein bL35 family.

The polypeptide is Large ribosomal subunit protein bL35 (Lactobacillus gasseri (strain ATCC 33323 / DSM 20243 / BCRC 14619 / CIP 102991 / JCM 1131 / KCTC 3163 / NCIMB 11718 / NCTC 13722 / AM63)).